Here is a 617-residue protein sequence, read N- to C-terminus: MPKVNINRDILYKALGFYIKTYTQEQFEDLCFAFGVELDEVTSEREMKKNETGVEDLTVSDDVIYKIDVSANRYDLLCLEGIARALNVYNHKASIPKYQIVPPKNSHEKLYISKEVESVRPVIVAGILRDITFTQESYDSFIDLQEKLHANICKKRSLVSIGTHDLDTLSGPFYYKALAPKDIKFVPLSQTKEYNAEELFKFYDESSSHLKKFLPIIKDSPVYPVIYDSKNVVCSLPPIINGEHSKIKLSTKNVFIEVTANDRTKANIVLNTMLTMFSEYCKQPFTMEQVEVIDADGKSTGLYPQIQEKQINAQVDYINKSAGINITPNDMVTLLKRMSLQSKLSDDEKSIIVDVPVTRSDIMHACDIMEDVAIGYGYDNLKKEIPNCNTIGRVQPINKLSELLANEIALAGFTEIMTFVLCQNRDNFTALNKADDGSSVKISNAVSEEFTEVRTNLVSTLLKSVSANKAAPLPLKMFEISDVSIKGSLGNKDLSDPNSNNSDVGAYNKRMLGAIYCNQSAKIEVIHGLLDRIMLVLDIKLDATRSSNKGYYLELSNDKLFLPGTGINVIVNGKRVGHMGIVHPLVLKNYSCSFPCTILELELTIDTMAHNVLLREN.

The B5 domain occupies 306-383; that stretch reads IQEKQINAQV…IGYGYDNLKK (78 aa). Residues D361, D367, E370, and D371 each coordinate Mg(2+).

The protein belongs to the phenylalanyl-tRNA synthetase beta subunit family. Type 2 subfamily. Tetramer of two alpha and two beta subunits. Requires Mg(2+) as cofactor.

It localises to the cytoplasm. The enzyme catalyses tRNA(Phe) + L-phenylalanine + ATP = L-phenylalanyl-tRNA(Phe) + AMP + diphosphate + H(+). This is Phenylalanine--tRNA ligase beta subunit (phesB) from Dictyostelium discoideum (Social amoeba).